A 498-amino-acid chain; its full sequence is MEPLQRKSELDFQSYRKMPLAQQRTQRLKPTSPEELHDLICVGFGPASLAIAIALHDALDPCLNKCAPTSGWQPKVAFLERQKQFAWHSGMLVPGSRMQISFIKDLATLRDPRSSFTFLNYLHQKDRLIHFTNLSTFLPARMEFEDYMRWCANQFSDVVTYGEEVIEVLPGKSSPDSPVVDYFTVLSRNVETGEISSRSARKVVLALGGTAKLPAELPQDPRIMHSSKYCTALPNLLKDNNEPYNIAVLGSGQSAAEIFHDLQKRYPNSRTSLIMRDTAMRPSDDSPFVNEVFNPERTDKFYNLSAAERERSLKADKATNYSVVRLELIEEIYHDMYLQRVKNPDETQWQHRILPSRKITRVEHYGPNKRMRVHVRAVKDGKDSLIGDGKEVLEVDALMVATGYNRNAHEQLLSKVQYLRPATQDRWTPSRDYRVDLDRSKVSAGAGIWLQGSNEQTHGLSDSLLSVLATRGGEMVESIFGEQLESAAVPDTRFRAML.

Residues 80-88 and Q99 each bind FAD; that span reads ERQKQFAWH. Substrate is bound at residue K104. Residue V165 coordinates FAD. Residues 251-254 and R276 each bind NADP(+); that span reads SGQS. Residues 290-293 and N320 each bind substrate; that span reads NEVF. 320–322 is an NADP(+) binding site; it reads NYS. Residue 463 to 465 coordinates FAD; the sequence is SLL. Residue S466 participates in substrate binding.

This sequence belongs to the lysine N(6)-hydroxylase/L-ornithine N(5)-oxygenase family. As to quaternary structure, homotetramer. The cofactor is FAD.

The enzyme catalyses L-ornithine + NADPH + O2 = N(5)-hydroxy-L-ornithine + NADP(+) + H2O. It catalyses the reaction L-ornithine + NADH + O2 = N(5)-hydroxy-L-ornithine + NAD(+) + H2O. Its pathway is siderophore biosynthesis. Catalyzes the conversion of L-ornithine to N(5)-hydroxyornithine, the first step in the biosynthesis of all hydroxamate-containing siderophores, such as the secreted triacetylfusarinine C (TAFC) involved in iron uptake and the intracellular iron storage compound desferriferricrocin (DFFC). In Emericella nidulans (strain FGSC A4 / ATCC 38163 / CBS 112.46 / NRRL 194 / M139) (Aspergillus nidulans), this protein is L-ornithine N(5)-monooxygenase.